We begin with the raw amino-acid sequence, 746 residues long: Stromal interaction molecule 2 (746 aa).

A signal peptide spans 1-14 (MLVLGLLVAGAADG). At 15–218 (CELVPRHLRG…RPPHNWMKDF (204 aa)) the chain is on the extracellular side. Positions 67 to 102 (FSLEALQTIHKQMDDDKDGGIEVEESDEFIREDMKY) constitute an EF-hand domain. Asp80, Asp82, Asp84, and Glu91 together coordinate Ca(2+). The N-linked (GlcNAc...) asparagine glycan is linked to Asn135. In terms of domain architecture, SAM spans 136-204 (WTLEDTLQWL…QLKALDVVLF (69 aa)). A helical transmembrane segment spans residues 219 to 235 (ILTVSIVIGVGGCWFAY). Residues 236-746 (TQNKTSKEHV…IKSLFKKKSK (511 aa)) lie on the Cytoplasmic side of the membrane. Residues 247–394 (KMMKDLESLQ…EKIKKKRSTV (148 aa)) are a coiled coil. Residues 483 to 562 (DLDEDTPPIV…SLPSPDPDIL (80 aa)) form a disordered region. Phosphoserine is present on Ser523. Residues 537–549 (HPSHPRHPHHPQH) show a composition bias toward basic residues. A phosphoserine mark is found at Ser609, Ser621, Ser640, Ser650, Ser661, Ser665, Ser680, and Ser697. The disordered stretch occupies residues 685 to 746 (SSGIPVPKPR…IKSLFKKKSK (62 aa)). Residues 723-732 (DLCHNGEKSK) show a composition bias toward basic and acidic residues. A compositionally biased stretch (basic residues) spans 733 to 746 (KPSKIKSLFKKKSK).

In terms of assembly, oligomer with STIM1. Interacts with ORAI1. Post-translationally, glycosylated. In terms of processing, phosphorylated predominantly on Ser residues. In terms of tissue distribution, expressed in all tissues and tumor cell lines examined.

It localises to the endoplasmic reticulum membrane. In terms of biological role, plays a role in mediating store-operated Ca(2+) entry (SOCE), a Ca(2+) influx following depletion of intracellular Ca(2+) stores. Functions as a highly sensitive Ca(2+) sensor in the endoplasmic reticulum which activates both store-operated and store-independent Ca(2+)-influx. Regulates basal cytosolic and endoplasmic reticulum Ca(2+) concentrations. Upon mild variations of the endoplasmic reticulum Ca(2+) concentration, translocates from the endoplasmic reticulum to the plasma membrane where it probably activates the Ca(2+) release-activated Ca(2+) (CRAC) channels ORAI1, ORAI2 and ORAI3. May inhibit STIM1-mediated Ca(2+) influx. The sequence is that of Stromal interaction molecule 2 (STIM2) from Homo sapiens (Human).